The primary structure comprises 128 residues: Spore germination protein 1/2/3-related protein (128 aa).

A signal peptide spans 1–26 (MNIRNTLVLLVSTVLVLMSCSIGCYA). 2 N-linked (GlcNAc...) asparagine glycosylation sites follow: Asn55 and Asn119.

Belongs to the Dictyostelium gerABC family.

The protein resides in the secreted. This chain is Spore germination protein 1/2/3-related protein, found in Dictyostelium discoideum (Social amoeba).